We begin with the raw amino-acid sequence, 356 residues long: Na(+)/H(+) exchange regulatory cofactor NHE-RF1 (356 aa).

S2 carries the post-translational modification N-acetylserine. Phosphoserine is present on residues S2 and S46. Positions 14–94 (LCCLEKGPNG…AVRLLVVDPE (81 aa)) constitute a PDZ 1 domain. A disordered region spans residues 113–142 (AQEKSEHTEPPAAADTKKAGDQNEAEKSHL). Residues 151–231 (LCTMKKGPNG…EAKLLVVDKE (81 aa)) enclose the PDZ 2 domain. The disordered stretch occupies residues 265-356 (NSREALVEPA…SKKNELFSNL (92 aa)). A phosphoserine mark is found at S266, S277, S287, and S288. The segment covering 272-288 (EPASESPRPALARSASS) has biased composition (low complexity). T290 carries the post-translational modification Phosphothreonine. Phosphoserine occurs at positions 291 and 299. Low complexity predominate over residues 307-317 (EPSSTSSSSDP). Residues 346–356 (WSKKNELFSNL) are compositionally biased toward basic and acidic residues.

In terms of assembly, homodimer, and heterodimer with NHERF2. Binds the N-termini of EZR, RDX and MSN. Binds the C-termini of PDGFRA, PDGFRB, ADRB2, NOS2 and CFTR. Binds ARHGAP17, EPI64, RACK1, OPRK1, GNAQ, CTNNB1 and PLCB3. Binds PDZK1. Interacts with CLCN3. Binds the C-terminus of PAG1. In resting T-cells, part of a PAG1-NHERF1-MSN complex which is disrupted upon TCR activation. Forms a complex with CFTR and SLC4A7. Forms a complex with SLC4A7 and ATP6V1B1. Interacts with TRPC4 (via the PDZ-binding domain). Directly interacts with HTR4. Interacts (via the PDZ 1 domain) with PODXL (via the C-terminal PDZ-binding motif DTHL); interaction is not detected in glomerular epithelium cells. Interacts (via the PDZ 1 domain) with PODXL (via the C-terminal PDZ-binding motif DTHL); the interaction take place early in the secretory pathway and is necessary for its apical membrane sorting. Interacts with SLC26A3. Interacts with MCC. Interacts with SLC34A1. Interacts (via the PDZ domains) with SLC26A6 isoform 4 and isoform 5. Interacts (via PDZ domains) with ACE2 (via PDZ-binding motif); the interaction may enhance ACE2 membrane residence.

Its subcellular location is the cytoplasm. It localises to the apical cell membrane. It is found in the cell projection. The protein localises to the filopodium. The protein resides in the ruffle. Its subcellular location is the microvillus. It localises to the endomembrane system. Its function is as follows. Scaffold protein that connects plasma membrane proteins with members of the ezrin/moesin/radixin family and thereby helps to link them to the actin cytoskeleton and to regulate their surface expression. Necessary for recycling of internalized ADRB2. Was first known to play a role in the regulation of the activity and subcellular location of SLC9A3. Necessary for cAMP-mediated phosphorylation and inhibition of SLC9A3. Involved in sperm capacitation. May participate in the regulation of the chloride and bicarbonate homeostasis in spermatozoa. May enhance Wnt signaling. May participate in HTR4 targeting to microvilli. Involved in the regulation of phosphate reabsorption in the renal proximal tubules. In Rattus norvegicus (Rat), this protein is Na(+)/H(+) exchange regulatory cofactor NHE-RF1 (Nherf1).